The sequence spans 252 residues: Protein IL-40 (252 aa).

A signal peptide spans 1–18 (MALLQLLLFAMLAACGFS). N-linked (GlcNAc...) asparagine glycosylation is found at Asn82 and Asn177.

Expressed in bone marrow, spleen and lymph node.

The protein localises to the secreted. Its function is as follows. Probable B cell-associated cytokine that plays a role in the regulation of humoral immune responses. Involved in lymphocyte B cell development and immunoglobulin/IgA production. This is Protein IL-40 from Mus musculus (Mouse).